We begin with the raw amino-acid sequence, 335 residues long: Nucleoid-associated protein Pput_1012 (335 aa).

The protein belongs to the YejK family.

It is found in the cytoplasm. Its subcellular location is the nucleoid. This chain is Nucleoid-associated protein Pput_1012, found in Pseudomonas putida (strain ATCC 700007 / DSM 6899 / JCM 31910 / BCRC 17059 / LMG 24140 / F1).